The primary structure comprises 477 residues: Otolin-1 (477 aa).

Residues 1-23 form the signal peptide; it reads MWMFSWLCAILIILAIAGMNTIA. 2 disordered regions span residues 28 to 55 and 111 to 337; these read HTKF…PEEE and QKGE…KGEL. A compositionally biased stretch (basic and acidic residues) spans 33–42; it reads KKSEEREMPK. The region spanning 116 to 175 is the Collagen-like 1 domain; sequence GETGQPGPKGEAGNLGIPGPPGVVGPQGPRGYKGEKGLKGERGDQGVPGYPGKPGAQGEP. Pro-133 and Pro-136 each carry hydroxyproline. Basic and acidic residues predominate over residues 147–159; sequence YKGEKGLKGERGD. Residues Pro-163, Pro-166, and Pro-169 each carry the hydroxyproline modification. The residue at position 178 (Lys-178) is a 5-hydroxylysine. Residue Lys-178 is glycosylated (O-linked (Gal...) hydroxylysine). Over residues 182-191 the composition is skewed to gly residues; it reads GNIGLGGVKG. N-linked (GlcNAc...) asparagine glycosylation occurs at Asn-202. Collagen-like domains lie at 209–268 and 278–337; these read GDQG…KGSK and GRNG…KGEL. Position 223 is a hydroxyproline (Pro-223). 2 stretches are compositionally biased toward basic and acidic residues: residues 226–240 and 247–277; these read KGEK…EMGD and SGER…EGKS. A hydroxyproline mark is found at Pro-283 and Pro-301. Residues 298–310 show a composition bias toward low complexity; it reads LGPPGLLGPTGPK. A 5-hydroxylysine modification is found at Lys-310. The O-linked (Gal...) hydroxylysine glycan is linked to Lys-310. The C1q domain occupies 338–473; sequence ARVPRSAFSA…GFLLYPEETS (136 aa). N-linked (GlcNAc...) asparagine glycosylation is present at Asn-381.

It belongs to the OTOL1 family. In terms of assembly, homooligomer; disulfide-linked; probably forms homotrimers. Interacts with OC90. Interacts with CBLN1.

The protein localises to the secreted. The protein resides in the extracellular space. It localises to the extracellular matrix. In terms of biological role, collagen-like protein specifically expressed in the inner ear, which provides an organic scaffold for otoconia, a calcium carbonate structure in the saccule and utricle of the ear. Acts as a scaffold for biomineralization: sequesters calcium and forms interconnecting fibrils between otoconia that are incorporated into the calcium crystal structure. Together with OC90, modulates calcite crystal morphology and growth kinetics. This chain is Otolin-1, found in Homo sapiens (Human).